The primary structure comprises 252 residues: Small ribosomal subunit protein uS3 (252 aa).

Residues 39–111 form the KH type-2 domain; it reads IRKLINNFAK…DVNLNVLEVK (73 aa). The interval 226 to 252 is disordered; that stretch reads SQSSNNPNRRPRNFKGGNNNHVNAKKN.

The protein belongs to the universal ribosomal protein uS3 family. In terms of assembly, part of the 30S ribosomal subunit. Forms a tight complex with proteins S10 and S14.

Binds the lower part of the 30S subunit head. Binds mRNA in the 70S ribosome, positioning it for translation. The sequence is that of Small ribosomal subunit protein uS3 from Aster yellows witches'-broom phytoplasma (strain AYWB).